A 452-amino-acid polypeptide reads, in one-letter code: Cholesterol 7-desaturase nvd 2 (452 aa).

A run of 2 helical transmembrane segments spans residues 6–26 (LIRITVMVITSERLLILMGLC) and 32–52 (FPVMIRVVFNAAVAIVIALVM). The Rieske domain occupies 107–212 (WFKVADSTWI…CCEVDGMAYL (106 aa)). Cys-148, His-150, Cys-169, and His-172 together coordinate [2Fe-2S] cluster.

The protein belongs to the cholesterol 7-desaturase family. Requires [2Fe-2S] cluster as cofactor.

The protein resides in the membrane. The catalysed reaction is cholesterol + NADPH + O2 + H(+) = 7-dehydrocholesterol + NADP(+) + 2 H2O. It carries out the reaction cholesterol + NADH + O2 + H(+) = 7-dehydrocholesterol + NAD(+) + 2 H2O. Its pathway is steroid hormone biosynthesis; dafachronic acid biosynthesis. In terms of biological role, catalyzes the production of 7-dehydrocholesterol (7-DHC or cholesta-5,7-dien-3beta-ol) by inserting a double bond (desaturating) at the C7-C8 single bond of cholesterol. Essential regulator of steroid biosynthesis as this reaction is the first step in the synthesis of the steroid hormone Delta(7)-dafachronic acid. The polypeptide is Cholesterol 7-desaturase nvd 2 (Ciona intestinalis (Transparent sea squirt)).